The following is a 162-amino-acid chain: 6,7-dimethyl-8-ribityllumazine synthase (162 aa).

5-amino-6-(D-ribitylamino)uracil contacts are provided by residues phenylalanine 22, 56 to 58 (TFE), and 80 to 82 (AVI). Residue 85–86 (GT) coordinates (2S)-2-hydroxy-3-oxobutyl phosphate. The Proton donor role is filled by histidine 88. Methionine 113 contacts 5-amino-6-(D-ribitylamino)uracil. (2S)-2-hydroxy-3-oxobutyl phosphate is bound at residue arginine 127.

Belongs to the DMRL synthase family.

The catalysed reaction is (2S)-2-hydroxy-3-oxobutyl phosphate + 5-amino-6-(D-ribitylamino)uracil = 6,7-dimethyl-8-(1-D-ribityl)lumazine + phosphate + 2 H2O + H(+). It functions in the pathway cofactor biosynthesis; riboflavin biosynthesis; riboflavin from 2-hydroxy-3-oxobutyl phosphate and 5-amino-6-(D-ribitylamino)uracil: step 1/2. Catalyzes the formation of 6,7-dimethyl-8-ribityllumazine by condensation of 5-amino-6-(D-ribitylamino)uracil with 3,4-dihydroxy-2-butanone 4-phosphate. This is the penultimate step in the biosynthesis of riboflavin. The sequence is that of 6,7-dimethyl-8-ribityllumazine synthase from Anaeromyxobacter dehalogenans (strain 2CP-1 / ATCC BAA-258).